Consider the following 223-residue polypeptide: CKLF-like MARVEL transmembrane domain-containing protein 5 (223 aa).

Positions 29–213 (FLTSHKGILL…DAFKIYRTEM (185 aa)) constitute an MARVEL domain. The next 4 membrane-spanning stretches (helical) occupy residues 35–55 (GILL…FTAS), 56–76 (ISAY…FLFL), 162–182 (FLRC…AVTS), and 186–206 (AAIA…YDAF).

This sequence belongs to the chemokine-like factor family. As to expression, highly expressed in the brain.

It is found in the membrane. This Homo sapiens (Human) protein is CKLF-like MARVEL transmembrane domain-containing protein 5 (CMTM5).